We begin with the raw amino-acid sequence, 134 residues long: Thionin-2.1 (134 aa).

An N-terminal signal peptide occupies residues M1 to A24. 3 disulfides stabilise this stretch: C27/C61, C28/C55, and C40/C49. Residues A68 to L134 constitute a propeptide, acidic domain.

This sequence belongs to the plant thionin (TC 1.C.44) family. Detected in rosette leaves and at a very high level in flowers and in siliques.

The protein localises to the secreted. Its function is as follows. Seems to function as a defense factor. Thionins are small plant proteins which are toxic to animal cells. They seem to exert their toxic effect at the level of the cell membrane. Their precise function is not known. The chain is Thionin-2.1 (THI2.1) from Arabidopsis thaliana (Mouse-ear cress).